We begin with the raw amino-acid sequence, 149 residues long: Calmodulin, striated muscle (149 aa).

EF-hand domains lie at 8-43 (EQIAEFKEAFSLFDRDGDGCITTMELGTVMRSLGQN), 44-79 (PTEAELQDMVGEVDADGSGTIDFPEFLSLMARKMRD), 81-116 (DSEEEIREAFRVFDKDGNGYISAAELRHVMTNLGEK), and 117-149 (LTDEEVDEMIKEADCNNDGQVNYEEFVRMMTEK). Residues D21, D23, D25, C27, E32, D57, D59, S61, T63, E68, D94, D96, N98, Y100, and E105 each contribute to the Ca(2+) site. N6,N6,N6-trimethyllysine is present on K116. 5 residues coordinate Ca(2+): D130, N132, D134, Q136, and E141.

Belongs to the calmodulin family.

In Gallus gallus (Chicken), this protein is Calmodulin, striated muscle (CCM1).